The following is a 303-amino-acid chain: Protoheme IX farnesyltransferase (303 aa).

6 consecutive transmembrane segments (helical) span residues 25–45 (MGLV…AIVM), 54–74 (IPQI…ACAL), 118–138 (CLFL…VGYV), 166–186 (IGWV…FLVV), 230–250 (LVLL…FVVI), and 280–300 (FVYS…VSLI).

This sequence belongs to the UbiA prenyltransferase family. Protoheme IX farnesyltransferase subfamily. Interacts with CtaA.

The protein resides in the cell membrane. The enzyme catalyses heme b + (2E,6E)-farnesyl diphosphate + H2O = Fe(II)-heme o + diphosphate. The protein operates within porphyrin-containing compound metabolism; heme O biosynthesis; heme O from protoheme: step 1/1. Its function is as follows. Converts heme B (protoheme IX) to heme O by substitution of the vinyl group on carbon 2 of heme B porphyrin ring with a hydroxyethyl farnesyl side group. This is Protoheme IX farnesyltransferase from Staphylococcus epidermidis (strain ATCC 35984 / DSM 28319 / BCRC 17069 / CCUG 31568 / BM 3577 / RP62A).